We begin with the raw amino-acid sequence, 359 residues long: Type-1 angiotensin II receptor (359 aa).

Residues 1 to 25 are Extracellular-facing; it reads MVPNYSTEETVKRIHVDCPVSGRHS. Asn-4 carries an N-linked (GlcNAc...) asparagine glycan. Asp-17 serves as a coordination point for angiotensin II. 2 disulfide bridges follow: Cys-18/Cys-274 and Cys-101/Cys-180. A helical transmembrane segment spans residues 26 to 55; the sequence is YIYIMVPTVYSIIFIIGIFGNSLVVIVIYC. At 56-61 the chain is on the cytoplasmic side; sequence YMKLKT. Residues 62 to 89 traverse the membrane as a helical segment; the sequence is VASIFLLNLALADLCFLITLPLWAAYTA. At 90-98 the chain is on the extracellular side; sequence MEYQWPFGN. Residues 99–125 traverse the membrane as a helical segment; the sequence is CLCKLASAGISFNLYASVFLLTCLSID. Residues 126–141 are Cytoplasmic-facing; sequence RYLAIVHPVKSRIRRT. Residues 142-165 form a helical membrane-spanning segment; the sequence is MFVARVTCIVIWLLAGVASLPVII. At 166 to 190 the chain is on the extracellular side; sequence HRNIFFAENLNMTVCGFRYDNNNTT. Arg-167 is a binding site for angiotensin II. Asn-176 is a glycosylation site (N-linked (GlcNAc...) asparagine). The angiotensin II site is built by Phe-182 and Tyr-184. Residues Asn-187 and Asn-188 are each glycosylated (N-linked (GlcNAc...) asparagine). A helical membrane pass occupies residues 191-216; it reads LRVGLGLSKNLLGFLIPFLIILTSYT. Lys-199 provides a ligand contact to angiotensin II. Residues 217–239 are Cytoplasmic-facing; it reads LIWKTLKKAYQIQRNKTRNDDIF. A helical membrane pass occupies residues 240–268; that stretch reads KMIVAIVFFFFFSWIPHQVFTFLDVLIQL. The Extracellular segment spans residues 269–278; that stretch reads HVITDCKITD. A helical transmembrane segment spans residues 279–304; that stretch reads IVDTAMPFTICIAYFNNCLNPFFYVF. Topologically, residues 305–359 are cytoplasmic; sequence FGKNFKKYFLQLIKYIPPNVSTHPSLTTKMSSLSYRPPENIRLPTKKTAGSFDAE.

Belongs to the G-protein coupled receptor 1 family. Post-translationally, C-terminal Ser or Thr residues may be phosphorylated.

It is found in the cell membrane. Receptor for angiotensin II, a vasoconstricting peptide, which acts as a key regulator of blood pressure and sodium retention by the kidney. The activated receptor in turn couples to G-alpha proteins G(q) (GNAQ, GNA11, GNA14 or GNA15) and thus activates phospholipase C and increases the cytosolic Ca(2+) concentrations, which in turn triggers cellular responses such as stimulation of protein kinase C. This Gallus gallus (Chicken) protein is Type-1 angiotensin II receptor (AGTR1).